The sequence spans 490 residues: Lignostilbene-alpha,beta-dioxygenase isozyme III (490 aa).

Positions 167, 218, 285, and 477 each coordinate Fe cation.

Belongs to the carotenoid oxygenase family. In terms of assembly, homodimer of two beta subunits. The cofactor is Fe(2+).

The catalysed reaction is 1,2-bis(4-hydroxy-3-methoxyphenyl)ethylene + O2 = 2 vanillin. Activity is high with beta-5 type stilbene and minimal with beta-1 type stilbene. A 4-hydroxyl group and trans-stilbene structure is essential for the binding of substrates to the enzyme. Catalyzes the cleavage of the interphenyl double bond (C alpha-C beta) of lignin-derived polyphenolic diaryl-propane type compounds (Stilbene). This is Lignostilbene-alpha,beta-dioxygenase isozyme III from Sphingomonas paucimobilis (Pseudomonas paucimobilis).